A 506-amino-acid polypeptide reads, in one-letter code: Dolichyl pyrophosphate Glc1Man9GlcNAc2 alpha-1,3-glucosyltransferase (506 aa).

The next 12 membrane-spanning stretches (helical) occupy residues 10–30 (RLLLWFFAVATAVKLLLIPSS), 101–121 (VIYFQRISVIVSDLCLLYGVY), 133–153 (NLICALVIWSPGLLIVDHIHF), 176–196 (LLGGFLFAVLLCFKHLFAVTA), 219–239 (LVTIGAVVVAVFAAAYGPFIY), 261–281 (YWAPNFWVFYIILDKGLAVLL), 305–325 (PFAVLPQITPLTTFAMVLLAI), 339–359 (GLVARWVAYAYTCGFLFGWHV), 384–401 (HYFLVSIVSCYSLYPLLY), 406–426 (YPIKVLLLLLHSVVMWLGFAA), 454–474 (YLMGLIIVEIVSQFLHPYFLG), and 479–499 (FLPLMLISTYCTVGIMYSWIW).

It belongs to the ALG6/ALG8 glucosyltransferase family.

The protein localises to the endoplasmic reticulum membrane. It carries out the reaction an alpha-D-Glc-(1-&gt;3)-alpha-D-Man-(1-&gt;2)-alpha-D-Man-(1-&gt;2)-alpha-D-Man-(1-&gt;3)-[alpha-D-Man-(1-&gt;2)-alpha-D-Man-(1-&gt;3)-[alpha-D-Man-(1-&gt;2)-alpha-D-Man-(1-&gt;6)]-alpha-D-Man-(1-&gt;6)]-beta-D-Man-(1-&gt;4)-beta-D-GlcNAc-(1-&gt;4)-alpha-D-GlcNAc-diphospho-di-trans,poly-cis-dolichol + a di-trans,poly-cis-dolichyl beta-D-glucosyl phosphate = an alpha-D-Glc-(1-&gt;3)-alpha-D-Glc-(1-&gt;3)-alpha-D-Man-(1-&gt;2)-alpha-D-Man-(1-&gt;2)-alpha-D-Man-(1-&gt;3)-[alpha-D-Man-(1-&gt;2)-alpha-D-Man-(1-&gt;3)-[alpha-D-Man-(1-&gt;2)-alpha-D-Man-(1-&gt;6)]-alpha-D-Man-(1-&gt;6)]-beta-D-Man-(1-&gt;4)-beta-D-GlcNAc-(1-&gt;4)-alpha-D-GlcNAc-diphospho-di-trans,poly-cis-dolichol + a di-trans,poly-cis-dolichyl phosphate + H(+). The protein operates within protein modification; protein glycosylation. Its function is as follows. Dolichyl pyrophosphate Glc1Man9GlcNAc2 alpha-1,3-glucosyltransferase that operates in the biosynthetic pathway of dolichol-linked oligosaccharides, the glycan precursors employed in protein asparagine (N)-glycosylation. The assembly of dolichol-linked oligosaccharides begins on the cytosolic side of the endoplasmic reticulum membrane and finishes in its lumen. The sequential addition of sugars to dolichol pyrophosphate produces dolichol-linked oligosaccharides containing fourteen sugars, including two GlcNAcs, nine mannoses and three glucoses. Once assembled, the oligosaccharide is transferred from the lipid to nascent proteins by oligosaccharyltransferases. In the lumen of the endoplasmic reticulum, adds the second glucose residue from dolichyl phosphate glucose (Dol-P-Glc) onto the lipid-linked oligosaccharide intermediate Glc(1)Man(9)GlcNAc(2)-PP-Dol to produce Glc(2)Man(9)GlcNAc(2)-PP-Dol. In Arabidopsis thaliana (Mouse-ear cress), this protein is Dolichyl pyrophosphate Glc1Man9GlcNAc2 alpha-1,3-glucosyltransferase.